A 159-amino-acid chain; its full sequence is Bacterioferritin (159 aa).

A Ferritin-like diiron domain is found at 1-145 (MQGDPEVLRL…TQLELMDKLG (145 aa)). Fe cation is bound at residue Glu-51. Met-52 lines the heme b pocket. Positions 54, 94, 127, and 130 each coordinate Fe cation.

This sequence belongs to the bacterioferritin family. As to quaternary structure, homooligomer of 24 subunits, arranged as 12 dimers, that are packed together to form an approximately spherical molecule with a central cavity, in which large amounts of iron can be deposited. Requires heme b as cofactor.

It catalyses the reaction 4 Fe(2+) + O2 + 4 H(+) = 4 Fe(3+) + 2 H2O. The enzyme catalyses Fe(2+)(in) = Fe(2+)(out). Iron-storage protein, whose ferroxidase center binds Fe(2+), oxidizes it using dioxygen to Fe(3+), and participates in the subsequent Fe(3+) oxide mineral core formation within the central cavity of the BFR protein shell. The sequence is that of Bacterioferritin (bfr) from Mycobacterium avium.